Here is a 581-residue protein sequence, read N- to C-terminus: Proline--tRNA ligase (581 aa).

The protein belongs to the class-II aminoacyl-tRNA synthetase family. ProS type 1 subfamily. Homodimer.

The protein localises to the cytoplasm. It catalyses the reaction tRNA(Pro) + L-proline + ATP = L-prolyl-tRNA(Pro) + AMP + diphosphate. Functionally, catalyzes the attachment of proline to tRNA(Pro) in a two-step reaction: proline is first activated by ATP to form Pro-AMP and then transferred to the acceptor end of tRNA(Pro). As ProRS can inadvertently accommodate and process non-cognate amino acids such as alanine and cysteine, to avoid such errors it has two additional distinct editing activities against alanine. One activity is designated as 'pretransfer' editing and involves the tRNA(Pro)-independent hydrolysis of activated Ala-AMP. The other activity is designated 'posttransfer' editing and involves deacylation of mischarged Ala-tRNA(Pro). The misacylated Cys-tRNA(Pro) is not edited by ProRS. This is Proline--tRNA ligase from Rhodococcus opacus (strain B4).